Consider the following 263-residue polypeptide: MSDAEEQEYEEEQPEEEEAAEEEEEAPEEPEPAAEPEEERPKPSRPVVPPLIPPKIPEGERVDFDDIHRKRMEKDLLELQTLIDVHFEQRKKEEEELVALKERIERRRAERAEQQRFRTEKERERQAKLAEEKMRKEEEEAKKRAEDDAKKKKVLSNMGAHFGGYLVKAEQKRGKRQTGREMKLRILSERKKPLNIDHMGEEQLREKAQELSDWIHQLESEKFDLMAKLKQQKYEINVLYNRISHAQKFRKGAGKGRVGGRWK.

Residues 1–38 are compositionally biased toward acidic residues; that stretch reads MSDAEEQEYEEEQPEEEEAAEEEEEAPEEPEPAAEPEE. 2 disordered regions span residues 1–64 and 109–154; these read MSDA…RVDF and AERA…KKKV. S2 is modified (phosphoserine; by CK2). Over residues 44–56 the composition is skewed to pro residues; sequence SRPVVPPLIPPKI. The segment covering 109–150 has biased composition (basic and acidic residues); it reads AERAEQQRFRTEKERERQAKLAEEKMRKEEEEAKKRAEDDAK.

Belongs to the troponin T family. In terms of assembly, interacts with TPM3. Expressed dominantly in slow muscles, like masseter, diaphragm, psoas major and spinnalis. Isoform 2 is also expressed in fast muscles.

Troponin T is the tropomyosin-binding subunit of troponin, the thin filament regulatory complex which confers calcium-sensitivity to striated muscle actomyosin ATPase activity. The protein is Troponin T, slow skeletal muscle (TNNT1) of Bos taurus (Bovine).